Here is an 83-residue protein sequence, read N- to C-terminus: Turripeptide Lol11.2 (83 aa).

The signal sequence occupies residues 1-27 (MARLMMTVGCLIFIVVLLDMMVPVSNT).

It belongs to the conopeptide I2-like superfamily. In terms of processing, contains 4 disulfide bonds. In terms of tissue distribution, expressed by the venom duct.

The protein localises to the secreted. Acts as a neurotoxin by inhibiting voltage-gated potassium channels (Kv). In Iotyrris olangoensis (Sea snail), this protein is Turripeptide Lol11.2.